A 78-amino-acid polypeptide reads, in one-letter code: uncharacterized protein (78 aa).

2 consecutive transmembrane segments (helical) span residues 12-32 (LVSV…ICVV) and 51-71 (GVGA…VAVH).

The protein resides in the cell membrane. This is an uncharacterized protein from Treponema pallidum (strain Nichols).